A 200-amino-acid polypeptide reads, in one-letter code: Ubiquinol-cytochrome-c reductase complex assembly factor 1 (200 aa).

It belongs to the CBP3 family.

The protein localises to the mitochondrion inner membrane. Required for the assembly of the ubiquinol-cytochrome c reductase complex (mitochondrial respiratory chain complex III or cytochrome b-c1 complex). May be involved in cytochrome b translation and/or stability. This chain is Ubiquinol-cytochrome-c reductase complex assembly factor 1 (uqcc1), found in Xenopus laevis (African clawed frog).